We begin with the raw amino-acid sequence, 121 residues long: Large ribosomal subunit protein bL12 (121 aa).

The protein belongs to the bacterial ribosomal protein bL12 family. In terms of assembly, homodimer. Part of the ribosomal stalk of the 50S ribosomal subunit. Forms a multimeric L10(L12)X complex, where L10 forms an elongated spine to which 2 to 4 L12 dimers bind in a sequential fashion. Binds GTP-bound translation factors.

Forms part of the ribosomal stalk which helps the ribosome interact with GTP-bound translation factors. Is thus essential for accurate translation. This Baumannia cicadellinicola subsp. Homalodisca coagulata protein is Large ribosomal subunit protein bL12.